Consider the following 110-residue polypeptide: Large ribosomal subunit protein uL22 (110 aa).

This sequence belongs to the universal ribosomal protein uL22 family. As to quaternary structure, part of the 50S ribosomal subunit.

In terms of biological role, this protein binds specifically to 23S rRNA; its binding is stimulated by other ribosomal proteins, e.g. L4, L17, and L20. It is important during the early stages of 50S assembly. It makes multiple contacts with different domains of the 23S rRNA in the assembled 50S subunit and ribosome. Functionally, the globular domain of the protein is located near the polypeptide exit tunnel on the outside of the subunit, while an extended beta-hairpin is found that lines the wall of the exit tunnel in the center of the 70S ribosome. This chain is Large ribosomal subunit protein uL22, found in Photobacterium profundum (strain SS9).